An 871-amino-acid chain; its full sequence is DNA mismatch repair protein MutS (871 aa).

621 to 628 (GPNMAGKS) lines the ATP pocket.

The protein belongs to the DNA mismatch repair MutS family.

In terms of biological role, this protein is involved in the repair of mismatches in DNA. It is possible that it carries out the mismatch recognition step. This protein has a weak ATPase activity. The chain is DNA mismatch repair protein MutS from Geobacter sulfurreducens (strain ATCC 51573 / DSM 12127 / PCA).